The chain runs to 402 residues: CCA-adding enzyme (402 aa).

Residues G32 and R35 each contribute to the ATP site. The CTP site is built by G32 and R35. The Mg(2+) site is built by D45 and D47. R116, D159, R162, R165, and R168 together coordinate ATP. CTP contacts are provided by R116, D159, R162, R165, and R168.

It belongs to the tRNA nucleotidyltransferase/poly(A) polymerase family. Bacterial CCA-adding enzyme type 3 subfamily. Homodimer. Mg(2+) is required as a cofactor.

It carries out the reaction a tRNA precursor + 2 CTP + ATP = a tRNA with a 3' CCA end + 3 diphosphate. It catalyses the reaction a tRNA with a 3' CCA end + 2 CTP + ATP = a tRNA with a 3' CCACCA end + 3 diphosphate. In terms of biological role, catalyzes the addition and repair of the essential 3'-terminal CCA sequence in tRNAs without using a nucleic acid template. Adds these three nucleotides in the order of C, C, and A to the tRNA nucleotide-73, using CTP and ATP as substrates and producing inorganic pyrophosphate. tRNA 3'-terminal CCA addition is required both for tRNA processing and repair. Also involved in tRNA surveillance by mediating tandem CCA addition to generate a CCACCA at the 3' terminus of unstable tRNAs. While stable tRNAs receive only 3'-terminal CCA, unstable tRNAs are marked with CCACCA and rapidly degraded. The chain is CCA-adding enzyme from Streptococcus agalactiae serotype III (strain NEM316).